A 214-amino-acid chain; its full sequence is Octanoyltransferase (214 aa).

Residues 31-206 (KDDADEIWLL…QLAEQLGYNY (176 aa)) enclose the BPL/LPL catalytic domain. Residues 70–77 (RGGQVTYH), 137–139 (SLG), and 150–152 (GLA) contribute to the substrate site. Cysteine 168 (acyl-thioester intermediate) is an active-site residue.

It belongs to the LipB family.

The protein resides in the cytoplasm. It carries out the reaction octanoyl-[ACP] + L-lysyl-[protein] = N(6)-octanoyl-L-lysyl-[protein] + holo-[ACP] + H(+). It participates in protein modification; protein lipoylation via endogenous pathway; protein N(6)-(lipoyl)lysine from octanoyl-[acyl-carrier-protein]: step 1/2. Its function is as follows. Catalyzes the transfer of endogenously produced octanoic acid from octanoyl-acyl-carrier-protein onto the lipoyl domains of lipoate-dependent enzymes. Lipoyl-ACP can also act as a substrate although octanoyl-ACP is likely to be the physiological substrate. This is Octanoyltransferase from Marinomonas sp. (strain MWYL1).